The sequence spans 207 residues: Small ribosomal subunit protein uS4 (207 aa).

The tract at residues aspartate 30–aspartate 51 is disordered. Residues serine 97–alanine 157 enclose the S4 RNA-binding domain.

It belongs to the universal ribosomal protein uS4 family. As to quaternary structure, part of the 30S ribosomal subunit. Contacts protein S5. The interaction surface between S4 and S5 is involved in control of translational fidelity.

One of the primary rRNA binding proteins, it binds directly to 16S rRNA where it nucleates assembly of the body of the 30S subunit. Its function is as follows. With S5 and S12 plays an important role in translational accuracy. This is Small ribosomal subunit protein uS4 from Verminephrobacter eiseniae (strain EF01-2).